Here is a 115-residue protein sequence, read N- to C-terminus: Cell division topological specificity factor (115 aa).

The disordered stretch occupies residues 89–115 (TGQIQLKEPKNQSEVDSPETEGKDQNS).

The protein belongs to the MinE family.

In terms of biological role, prevents the cell division inhibition by proteins MinC and MinD at internal division sites while permitting inhibition at polar sites. This ensures cell division at the proper site by restricting the formation of a division septum at the midpoint of the long axis of the cell. This chain is Cell division topological specificity factor, found in Prochlorococcus marinus (strain NATL2A).